A 270-amino-acid chain; its full sequence is High choriolytic enzyme 1 (270 aa).

The N-terminal stretch at 1–20 (MNLAPSTCLLLLFLLDIAQA) is a signal peptide. Residues 21-70 (LPVWDEEGHEEGHEEGDGDDFVDITTRILTSNNNTDQLLLEGDLVAPTNR) constitute a propeptide, activation peptide. Asparagine 53 carries an N-linked (GlcNAc...) asparagine glycan. In terms of domain architecture, Peptidase M12A spans 71–270 (NAMKCWSSSC…TRINVLYNCR (200 aa)). 3 disulfides stabilise this stretch: cysteine 75/cysteine 80, cysteine 120/cysteine 269, and cysteine 141/cysteine 161. Histidine 169 provides a ligand contact to Zn(2+). Glutamate 170 is a catalytic residue. The Zn(2+) site is built by histidine 173 and histidine 179.

The cofactor is Zn(2+).

The protein resides in the zymogen granule. It carries out the reaction Hydrolysis of the inner layer of fish egg envelope. Also hydrolysis of casein and small molecule substrates such as succinyl-Leu-Leu-Val-Tyr-|-7-(4-methyl)coumarylamide.. Participates in the breakdown of the egg envelope, which is derived from the egg extracellular matrix, at the time of hatching. Thus allowing the newly hatched fish to swim free. HCE binds tightly to the egg envelope while it exerts the choriolytic swelling action. This chain is High choriolytic enzyme 1 (hcea), found in Oryzias latipes (Japanese rice fish).